The following is a 328-amino-acid chain: B3 domain-containing protein At5g60140 (328 aa).

The segment at residues 13–109 (SKFFKPYLPS…FFNFSIFDHE (97 aa)) is a DNA-binding region (TF-B3). A disordered region spans residues 145–221 (LNSDDSDDSD…EDEDDLEDED (77 aa)). Composition is skewed to acidic residues over residues 148-182 (DDSDDSDNDYSVEDDNVAEDDDGLEDEVDVEAEDG) and 190-221 (GLEDEDDDEAEDGYDAKDDDGLEDEDDLEDED).

Its subcellular location is the nucleus. This chain is B3 domain-containing protein At5g60140, found in Arabidopsis thaliana (Mouse-ear cress).